The primary structure comprises 625 residues: DNA mismatch repair protein MutL (625 aa).

The disordered stretch occupies residues 404-427 (PPPRNAPQSTGMPSMAGTGLPATS).

This sequence belongs to the DNA mismatch repair MutL/HexB family.

In terms of biological role, this protein is involved in the repair of mismatches in DNA. It is required for dam-dependent methyl-directed DNA mismatch repair. May act as a 'molecular matchmaker', a protein that promotes the formation of a stable complex between two or more DNA-binding proteins in an ATP-dependent manner without itself being part of a final effector complex. This chain is DNA mismatch repair protein MutL, found in Xanthomonas oryzae pv. oryzae (strain MAFF 311018).